The chain runs to 560 residues: Transcription termination factor 5, mitochondrial (560 aa).

The N-terminal 23 residues, 1–23 (MLRNGQNQAQLLARSLGQLARGM), are a transit peptide targeting the mitochondrion. The interval 23-47 (MASSKRVSSKKEDLKPKLPKPPTVE) is disordered.

It belongs to the mTERF family. In terms of assembly, probably binds to the mTTF-DNA complex.

It is found in the mitochondrion. Its function is as follows. Binds promoter DNA and regulates initiation of transcription. Regulates mitochondrial replication and transcription. Required for normal topology and maintenance of mitochondrial DNA (mtDNA) levels. Regulates mtDNA replication by re-activating replication after replication pausing. Likely to regulate replication pausing by coordinating with the mitochondrial termination factor mTTF which promotes replication pausing. Their function in replication pausing prevents unregulated replication that may occur for example by collisions between the machineries of DNA replication and transcription during mtDNA synthesis. This ensures the incorporation of RNA transcripts into replication intermediates at the replication fork and allows for proper fork progression. Possibly functions downstream of Dref which activates genes involved in mtDNA replication and maintenance. This is Transcription termination factor 5, mitochondrial from Drosophila melanogaster (Fruit fly).